A 378-amino-acid chain; its full sequence is Aminomethyltransferase (378 aa).

The protein belongs to the GcvT family. As to quaternary structure, the glycine cleavage system is composed of four proteins: P, T, L and H.

The enzyme catalyses N(6)-[(R)-S(8)-aminomethyldihydrolipoyl]-L-lysyl-[protein] + (6S)-5,6,7,8-tetrahydrofolate = N(6)-[(R)-dihydrolipoyl]-L-lysyl-[protein] + (6R)-5,10-methylene-5,6,7,8-tetrahydrofolate + NH4(+). In terms of biological role, the glycine cleavage system catalyzes the degradation of glycine. This Acidobacterium capsulatum (strain ATCC 51196 / DSM 11244 / BCRC 80197 / JCM 7670 / NBRC 15755 / NCIMB 13165 / 161) protein is Aminomethyltransferase.